The following is a 225-amino-acid chain: Phosphoribosylformylglycinamidine synthase subunit PurQ (225 aa).

The Glutamine amidotransferase type-1 domain maps to 4-225 (RIGVITFPGT…LSVLDTLVTA (222 aa)). The active-site Nucleophile is the C87. Active-site residues include H196 and E198.

Part of the FGAM synthase complex composed of 1 PurL, 1 PurQ and 2 PurS subunits.

The protein localises to the cytoplasm. It catalyses the reaction N(2)-formyl-N(1)-(5-phospho-beta-D-ribosyl)glycinamide + L-glutamine + ATP + H2O = 2-formamido-N(1)-(5-O-phospho-beta-D-ribosyl)acetamidine + L-glutamate + ADP + phosphate + H(+). The catalysed reaction is L-glutamine + H2O = L-glutamate + NH4(+). Its pathway is purine metabolism; IMP biosynthesis via de novo pathway; 5-amino-1-(5-phospho-D-ribosyl)imidazole from N(2)-formyl-N(1)-(5-phospho-D-ribosyl)glycinamide: step 1/2. In terms of biological role, part of the phosphoribosylformylglycinamidine synthase complex involved in the purines biosynthetic pathway. Catalyzes the ATP-dependent conversion of formylglycinamide ribonucleotide (FGAR) and glutamine to yield formylglycinamidine ribonucleotide (FGAM) and glutamate. The FGAM synthase complex is composed of three subunits. PurQ produces an ammonia molecule by converting glutamine to glutamate. PurL transfers the ammonia molecule to FGAR to form FGAM in an ATP-dependent manner. PurS interacts with PurQ and PurL and is thought to assist in the transfer of the ammonia molecule from PurQ to PurL. The polypeptide is Phosphoribosylformylglycinamidine synthase subunit PurQ (Nocardia farcinica (strain IFM 10152)).